A 120-amino-acid chain; its full sequence is UPF0145 protein Mboo_1021 (120 aa).

It belongs to the UPF0145 family.

This is UPF0145 protein Mboo_1021 from Methanoregula boonei (strain DSM 21154 / JCM 14090 / 6A8).